Reading from the N-terminus, the 205-residue chain is Molybdenum cofactor guanylyltransferase (205 aa).

Residues L14–G16, K27, D77, and D107 contribute to the GTP site. D107 is a Mg(2+) binding site.

The protein belongs to the MobA family. In terms of assembly, monomer. Requires Mg(2+) as cofactor.

The protein localises to the cytoplasm. The catalysed reaction is Mo-molybdopterin + GTP + H(+) = Mo-molybdopterin guanine dinucleotide + diphosphate. Its function is as follows. Transfers a GMP moiety from GTP to Mo-molybdopterin (Mo-MPT) cofactor (Moco or molybdenum cofactor) to form Mo-molybdopterin guanine dinucleotide (Mo-MGD) cofactor. In Burkholderia ambifaria (strain MC40-6), this protein is Molybdenum cofactor guanylyltransferase.